Reading from the N-terminus, the 396-residue chain is NADH-quinone oxidoreductase subunit D 1 (396 aa).

It belongs to the complex I 49 kDa subunit family. NDH-1 is composed of 14 different subunits. Subunits NuoB, C, D, E, F, and G constitute the peripheral sector of the complex.

It localises to the cell inner membrane. It catalyses the reaction a quinone + NADH + 5 H(+)(in) = a quinol + NAD(+) + 4 H(+)(out). Functionally, NDH-1 shuttles electrons from NADH, via FMN and iron-sulfur (Fe-S) centers, to quinones in the respiratory chain. The immediate electron acceptor for the enzyme in this species is believed to be ubiquinone. Couples the redox reaction to proton translocation (for every two electrons transferred, four hydrogen ions are translocated across the cytoplasmic membrane), and thus conserves the redox energy in a proton gradient. This Nitrobacter hamburgensis (strain DSM 10229 / NCIMB 13809 / X14) protein is NADH-quinone oxidoreductase subunit D 1.